The chain runs to 623 residues: V-type proton ATPase catalytic subunit A (623 aa).

ATP is bound at residue 252-259 (GAFGCGKT).

This sequence belongs to the ATPase alpha/beta chains family. As to quaternary structure, V-ATPase is a heteromultimeric enzyme composed of a peripheral catalytic V1 complex (main components: subunits A, B, C, D, E, and F) attached to an integral membrane V0 proton pore complex (main component: the proteolipid protein).

It catalyses the reaction ATP + H2O + 4 H(+)(in) = ADP + phosphate + 5 H(+)(out). Its function is as follows. Catalytic subunit of the peripheral V1 complex of vacuolar ATPase. V-ATPase vacuolar ATPase is responsible for acidifying a variety of intracellular compartments in eukaryotic cells. This chain is V-type proton ATPase catalytic subunit A, found in Daucus carota (Wild carrot).